The sequence spans 319 residues: F-box only protein 8 (319 aa).

In terms of domain architecture, F-box spans 68-111; the sequence is FINLEMLPPELSFTILSYLNATDLCLASCVWQDLANDELLWQGL. Residues 146-276 enclose the SEC7 domain; sequence FNANPDEGVN…LILLSIDLTS (131 aa).

Functionally, may promote guanine-nucleotide exchange on an ARF. Promotes the activation of ARF through replacement of GDP with GTP (Potential). This Homo sapiens (Human) protein is F-box only protein 8 (FBXO8).